Consider the following 383-residue polypeptide: MSASHEQNSAAAPNGPNLSEALISLGNLRHNLACIRAITGPQCRVMGIVKANAYGHGATQVTATLEAEGVRDFGVANIYEAIELLQEHRMLPDSRILAFASPLAGHIDLYLQHGVEMTVCDHETARAAESIAAACGRRLQVQLKVDTGMGRLGVTPEEAAELLELIEACPNLELTGIYTHFAESDKPEGFTARQLERFLHVTGAYERRTGKTVTKHAANSGAIISMPDARLDMVRPGILLYGCHPVDAAPSTVPVRPVMQFQSRVIFVKEVPAGTAISYNRTWSAPKATRIATISAGYADGFHRALSNQARVSIGGKSFPQVGTITMDQTMVNLGSDDSVKVGDTAVLFGWDGPSAGEQALAAGTISYELLCSVSRRVRRIVV.

The Proton acceptor; specific for D-alanine role is filled by Lys50. The residue at position 50 (Lys50) is an N6-(pyridoxal phosphate)lysine. Arg151 serves as a coordination point for substrate. Catalysis depends on Tyr279, which acts as the Proton acceptor; specific for L-alanine. Met327 lines the substrate pocket.

Belongs to the alanine racemase family. Requires pyridoxal 5'-phosphate as cofactor.

It carries out the reaction L-alanine = D-alanine. It functions in the pathway amino-acid biosynthesis; D-alanine biosynthesis; D-alanine from L-alanine: step 1/1. Its function is as follows. Catalyzes the interconversion of L-alanine and D-alanine. May also act on other amino acids. This Chlorobaculum tepidum (strain ATCC 49652 / DSM 12025 / NBRC 103806 / TLS) (Chlorobium tepidum) protein is Alanine racemase (alr).